Consider the following 1529-residue polypeptide: DNA-directed RNA polymerase subunit beta' (1529 aa).

Zn(2+) is bound by residues cysteine 156, cysteine 158, cysteine 183, and cysteine 186. Aspartate 1328, aspartate 1330, and aspartate 1332 together coordinate Mg(2+).

It belongs to the RNA polymerase beta' chain family. RpoC1 subfamily. In plastids the minimal PEP RNA polymerase catalytic core is composed of four subunits: alpha, beta, beta', and beta''. When a (nuclear-encoded) sigma factor is associated with the core the holoenzyme is formed, which can initiate transcription. Mg(2+) serves as cofactor. Requires Zn(2+) as cofactor.

Its subcellular location is the plastid. The protein resides in the chloroplast. It carries out the reaction RNA(n) + a ribonucleoside 5'-triphosphate = RNA(n+1) + diphosphate. Its function is as follows. DNA-dependent RNA polymerase catalyzes the transcription of DNA into RNA using the four ribonucleoside triphosphates as substrates. The chain is DNA-directed RNA polymerase subunit beta' from Tetradesmus obliquus (Green alga).